The sequence spans 833 residues: Serine/threonine-protein phosphatase 4 regulatory subunit 3A (833 aa).

A WH1 domain is found at 1-100; it reads MTDTRRRVKV…DEIWEKICQV (100 aa). Phosphoserine is present on residues S117 and S127. K655 carries the N6-acetyllysine modification. The span at 683 to 694 shows a compositional bias: acidic residues; sequence FNTDEDDMEDGE. Disordered regions lie at residues 683-712 and 733-833; these read FNTD…IMDP and KTNL…KFDS. 7 positions are modified to phosphoserine: S698, S741, S768, S771, S774, S777, and S780. A compositionally biased stretch (polar residues) spans 734–751; that stretch reads TNLSGRQSPSFKLSLSSG. The span at 752–768 shows a compositional bias: low complexity; the sequence is TKTNLTSQSSTTNLPGS. Residues 785 to 794 show a composition bias toward polar residues; that stretch reads PKNTSQTAAI. Over residues 806 to 820 the composition is skewed to acidic residues; sequence YPDDDEDDDEDEDKE.

This sequence belongs to the SMEK family. As to quaternary structure, serine/threonine-protein phosphatase 4 (PP4) occurs in different assemblies of the catalytic and one or more regulatory subunits. Component of the PP4 complex PPP4C-PPP4R2-PPP4R3A. Interacts with PPP4C; the interaction requires PPP4R2.

The protein localises to the cytoplasm. It localises to the cytoskeleton. The protein resides in the microtubule organizing center. It is found in the centrosome. Its subcellular location is the nucleus. Its function is as follows. Regulatory subunit of serine/threonine-protein phosphatase 4. May regulate the activity of PPP4C at centrosomal microtubule organizing centers. The PPP4C-PPP4R2-PPP4R3A PP4 complex specifically dephosphorylates H2AX phosphorylated on 'Ser-140' (gamma-H2AX) generated during DNA replication and required for DNA DSB repair. The protein is Serine/threonine-protein phosphatase 4 regulatory subunit 3A of Homo sapiens (Human).